The sequence spans 275 residues: Secreted RxLR effector protein 153 (275 aa).

The N-terminal stretch at 1–27 (MRNRAFLFGLFFIEYACLVLFAAPTRA) is a signal peptide. A glycan (N-linked (GlcNAc...) asparagine) is linked at N45. The RxLR-dEER motif lies at 48–63 (RTLQADDSKRISAEER).

This sequence belongs to the RxLR effector family.

It localises to the secreted. Its subcellular location is the host cell membrane. Its function is as follows. Secreted effector that completely suppresses the host cell death induced by cell death-inducing proteins. The protein is Secreted RxLR effector protein 153 of Plasmopara viticola (Downy mildew of grapevine).